The chain runs to 911 residues: General transcription factor 3C polypeptide 2 (911 aa).

2 disordered regions span residues 34–187 (LDVK…RRRA) and 205–297 (ALPA…MAPN). The span at 35 to 46 (DVKTSSEMTSAE) shows a compositional bias: polar residues. A Phosphoserine modification is found at Ser63. Over residues 64–81 (PDQRRLPPEQESLSRLEQ) the composition is skewed to basic and acidic residues. Over residues 92–112 (SKPRASKPGRKRGGRTRKGPK) the composition is skewed to basic residues. A compositionally biased stretch (pro residues) spans 114-123 (PQQPNPPSAP). Phosphoserine occurs at positions 132, 165, 167, 220, and 260. Residues 253–262 (EAEDVEESEG) show a composition bias toward acidic residues. Residues 263-275 (PSESSSEPEPAVP) are compositionally biased toward low complexity. WD repeat units lie at residues 465 to 521 (CDNG…ALLA) and 552 to 593 (SECG…PLQR). Ser597 carries the post-translational modification Phosphoserine. The stretch at 611-651 (AHDQAVRTLQWCKANSHFLASAGSDRKIKFWDLRRPYEPIN) is one WD 3 repeat. The disordered stretch occupies residues 765-785 (SPEGPDHSSASSGVPNPPKAR). The stretch at 832–874 (LQLEAIHKVRFSPNLDSYGWLVSGGQSGLVRIHFVRGLASPLG) is one WD 4 repeat. Phosphoserine is present on residues Ser871, Ser892, and Ser893. Residues 889-911 (FQPSSPTRRPGFSPTSHRLLPTP) form a disordered region. Thr895 carries the phosphothreonine modification. A Phosphoserine modification is found at Ser901.

In terms of assembly, part of the TFIIIC subcomplex TFIIIC2, consisting of six subunits, GTF3C1, GTF3C2, GTF3C3, GTF3C4, GTF3C5 and GTF3C6.

The protein localises to the nucleus. In terms of biological role, required for RNA polymerase III-mediated transcription. Component of TFIIIC that initiates transcription complex assembly on tRNA and is required for transcription of 5S rRNA and other stable nuclear and cytoplasmic RNAs. May play a direct role in stabilizing interactions of TFIIIC2 with TFIIIC1. The sequence is that of General transcription factor 3C polypeptide 2 (GTF3C2) from Pongo abelii (Sumatran orangutan).